The following is a 941-amino-acid chain: RNA-directed RNA polymerase (941 aa).

Positions Ser875–Pro918 are disordered. The segment covering Met905–Pro918 has biased composition (low complexity).

As to quaternary structure, forms a ribonucleoprotein complex with the 23S RNA, where a single polymerase molecule binds to a single viral RNA genome. Since the viral RNA is not encapsidated, ribonucleoprotein complex formation appears to be the strategy to survive in the host as persistent virus.

The protein resides in the host cytoplasm. It catalyses the reaction RNA(n) + a ribonucleoside 5'-triphosphate = RNA(n+1) + diphosphate. Functionally, RNA-directed RNA polymerase that replicates the viral (+) and (-) genome. The chain is RNA-directed RNA polymerase from Saccharomyces 23S RNA narnavirus (ScNV-23S).